A 333-amino-acid chain; its full sequence is Gramillins biosynthetic cluster protein FGSG_00039 (333 aa).

Its pathway is mycotoxin biosynthesis. Functionally, part of the gene cluster that mediates the biosynthesis of gramillins A and B, bicyclic lipopeptides that induce cell death in maize leaves but not in wheat leaves. The nonribosomal peptide synthetase GRA1 incorporates respectively a glutamic adic (Glu), a leucine (Leu), a serine (Ser), a hydroxyglutamine (HOGln), a 2-amino decanoic acid, and 2 cysteins (CysB and CysA). The biosynthesis of 2-amino decanoic acid incorporated in gramillins could be initiated by a fatty acid synthase composed of the alpha and beta subunits FGSG_00036 and FGSG_11656. The cytochrome P450 monooxygenase FGSG_15680 could hydroxylate the fatty acid chain. Subsequent oxidation to the ketone by the oxidoreductase FGSG_00048 and transamination by aminotransferase FGSG_00049 could form 2-amino-decanoic acid. On the other hand, FGSG_15680 could also be responsible for the HO-modified glutamine at the gamma-position. Whether hydroxylation occurs on the fully assembled product or on the Gln residue prior to assembly into the gramillins requires further proof. The thioredoxin FGSG_00043 could also be required for the disulfide-bond formation between CysA and CysB. The specific involvement of the remaining proteins from the cluster is more difficult to discern, but could have broader regulatory (FGSG_00040 and FGSG_11657) or enzymatic functions (FGSG_00044 and FGSG_00045). The final C-domain of GRA1 does not possess the expected sequence of a termination CT domain, often implicated in macrocyclization and release of a cyclopeptidein fungal NRPs; and the thioesterase FGSG_00047 may act in concert with the terminal C-domain of GRA1 to catalyze the formation of the macrocyclic anhydride and release of the products. The chain is Gramillins biosynthetic cluster protein FGSG_00039 from Gibberella zeae (strain ATCC MYA-4620 / CBS 123657 / FGSC 9075 / NRRL 31084 / PH-1) (Wheat head blight fungus).